A 446-amino-acid polypeptide reads, in one-letter code: N-succinylarginine dihydrolase (446 aa).

Substrate-binding positions include 19–28 (AGLSFGNVAS), N110, and 137–138 (HR). Residue E174 is part of the active site. Position 213 (R213) interacts with substrate. H249 is a catalytic residue. Residues D251 and N364 each coordinate substrate. The Nucleophile role is filled by C370.

Belongs to the succinylarginine dihydrolase family. Homodimer.

The enzyme catalyses N(2)-succinyl-L-arginine + 2 H2O + 2 H(+) = N(2)-succinyl-L-ornithine + 2 NH4(+) + CO2. It functions in the pathway amino-acid degradation; L-arginine degradation via AST pathway; L-glutamate and succinate from L-arginine: step 2/5. Its function is as follows. Catalyzes the hydrolysis of N(2)-succinylarginine into N(2)-succinylornithine, ammonia and CO(2). This is N-succinylarginine dihydrolase from Burkholderia orbicola (strain MC0-3).